The following is an 869-amino-acid chain: Alanine--tRNA ligase (869 aa).

Residues His-559, His-563, Cys-660, and His-664 each contribute to the Zn(2+) site.

It belongs to the class-II aminoacyl-tRNA synthetase family. It depends on Zn(2+) as a cofactor.

It is found in the cytoplasm. The catalysed reaction is tRNA(Ala) + L-alanine + ATP = L-alanyl-tRNA(Ala) + AMP + diphosphate. Catalyzes the attachment of alanine to tRNA(Ala) in a two-step reaction: alanine is first activated by ATP to form Ala-AMP and then transferred to the acceptor end of tRNA(Ala). Also edits incorrectly charged Ser-tRNA(Ala) and Gly-tRNA(Ala) via its editing domain. This chain is Alanine--tRNA ligase, found in Herminiimonas arsenicoxydans.